The following is an 83-amino-acid chain: Small ribosomal subunit protein eS21 (83 aa).

Belongs to the eukaryotic ribosomal protein eS21 family. In terms of assembly, component of the 40S small ribosomal subunit. Interacts with sta.

It localises to the cytoplasm. The protein localises to the cytosol. It is found in the rough endoplasmic reticulum. In Ceratitis capitata (Mediterranean fruit fly), this protein is Small ribosomal subunit protein eS21 (RpS21).